The primary structure comprises 380 residues: E3 ubiquitin-protein ligase PHF7 (380 aa).

A disordered region spans residues Met1–Thr23. The segment covering His10–Thr23 has biased composition (basic residues). A C2HC pre-PHD-type zinc finger spans residues Gly30–Leu68. Residues Cys33, Cys36, His58, and Cys61 each contribute to the Zn(2+) site. The segment at Lys67 to Arg92 is required for interaction and ubiquitination of the nucleosome core particle. A PHD-type zinc finger spans residues Lys96–Arg145. Zn(2+) is bound by residues Cys98, Cys101, Cys110, Cys115, His120, Cys123, Cys141, His144, Cys159, Cys162, Cys178, Cys179, His185, Cys188, Cys203, Cys206, Cys247, Cys252, Cys272, Cys275, His281, Cys284, Cys296, and Cys299. Residues Ile150 to Asp306 form a required for interaction with ubiquitinated UBE2D2 region. An RING-type; degenerate zinc finger spans residues Cys159–Asn207. Positions Arg243–Leu300 are required for association with and ubiquitination of H3. Positions Glu352–Ser367 are enriched in low complexity. The tract at residues Glu352–Lys380 is disordered.

As to quaternary structure, interacts with MEF2C; the interaction promotes MEF2C binding to its transcription targets. Interacts with GATA4; the interaction promotes GATA4 binding to its transcription targets. Interacts with UBE2D2; the interaction inhibits cleavage of PHF7 and promotes association of the complex with the nucleosome core particle.

The protein localises to the nucleus. It catalyses the reaction S-ubiquitinyl-[E2 ubiquitin-conjugating enzyme]-L-cysteine + [acceptor protein]-L-lysine = [E2 ubiquitin-conjugating enzyme]-L-cysteine + N(6)-ubiquitinyl-[acceptor protein]-L-lysine.. It participates in protein modification; protein ubiquitination. Its function is as follows. E3 ubiquitin-protein ligase which ubiquitinates histone H3 at 'Lys-14'. Required for male fertility, via inhibition of SPOP-mediated BRDT degradation when in the presence of acetylated histone H4 in early condensing spermatids. Stabilization of BRDT allows it to facilitate histone removal in early condensing spermatids and promote the progression of histone-to-protamine exchange. Promotes the expression of steroidogenesis proteins in the testes, and as a result plays a role in maintaining testosterone levels and repressing osteoclastogenesis. Promotes transcription of cardiac enhancer genes by facilitating binding of cardiac transcription factors such as MEF2C and GATA4 to target gene promoters. Ubiquitinates histone H4. Ubiquitinates histone H2A and H3 as part of the nucleosome core particle. The polypeptide is E3 ubiquitin-protein ligase PHF7 (Rattus norvegicus (Rat)).